Here is a 393-residue protein sequence, read N- to C-terminus: MTRVVLAAAYRTPIGVFGGAFKDVPAYDLGATLIEHIIKETGLNPSEIDEVIIGNVLQAGQGQNPARIAAMKGGLPETVPAFTVNKVCGSGLKSIQLAYQSIVTGENDIVLAGGMENMSQSPMLVNNSRFGFKMGHQSMVDSMVYDGLTDVFNQYHMGITAENLVEQYGISREEQDTFAVNSQQKAVRAQQNGEFDSEIVPVSIPQRKGEPILVTKDEGVRENVSVEKLSRLRPAFKKDGTVTAGNASGINDGAAMMLVMSEDKAKELNIEPLAVLDGFGSHGVDPSIMGIAPVGAVEKALKRSKKELSDIDVFELNEAFAAQSLAVDRELKLPPEKVNVKGGAIALGHPIGASGARVLVTLLHQLNDEVETGLTSLCIGGGQAIAAVVSKYK.

Cysteine 88 acts as the Acyl-thioester intermediate in catalysis. Residues histidine 349 and cysteine 378 each act as proton acceptor in the active site.

The protein belongs to the thiolase-like superfamily. Thiolase family.

It localises to the cytoplasm. The catalysed reaction is 2 acetyl-CoA = acetoacetyl-CoA + CoA. The sequence is that of Probable acetyl-CoA acyltransferase from Staphylococcus aureus (strain MSSA476).